A 781-amino-acid chain; its full sequence is Catenin beta-1 (781 aa).

The tract at residues 34 to 56 (GIHSGATTTAPSLSGKGNPEDED) is disordered. ARM repeat units follow at residues 141 to 180 (NYQD…QLSK), 225 to 264 (REGL…NLLL), 267 to 306 (EGAK…ILAY), 351 to 390 (SSNK…NLSD), 391 to 429 (AATK…NLTC), 432 to 473 (YKNK…HLTS), 479 to 519 (EMAQ…NLAL), 521 to 562 (PANH…QFVE), 584 to 623 (IHNR…DVAQ), and 625 to 664 (KEAA…RMSE). A compositionally biased stretch (basic and acidic residues) spans 735–745 (MDHDMGGHHPG). Residues 735 to 781 (MDHDMGGHHPGADYPVDGLPDLSHAQDLMDGLPPGDSNQLAWFDTDL) form a disordered region.

Belongs to the beta-catenin family. As to quaternary structure, interacts with EP-Cadherin/CDH3. Interacts with custos; the interaction is positively regulated by Wnt stimulation. Phosphorylation by gsk3b promotes ubiquitination and subsequent degradation by the proteasome. Post-translationally, ubiquitinated when phosphorylated by gsk3b, leading to its degradation. Expressed at intercalated disks in the heart (at protein level).

Its subcellular location is the cytoplasm. The protein resides in the nucleus. The protein localises to the cell membrane. Key downstream component of the canonical Wnt signaling pathway. In the absence of Wnt, forms a complex with axin1, axin2, apc, csnk1a1 and gsk3b that promotes phosphorylation on N-terminal Ser and Thr residues and ubiquitination of ctnnb1 and its subsequent degradation by the proteasome. In the presence of Wnt ligand, ctnnb1 is not ubiquitinated and accumulates in the nucleus, where it acts as a coactivator for transcription factors of the TCF/LEF family, leading to activate Wnt responsive genes. Plays a key role in dorsoventral patterning: in prospective ventral blastomeres, its down-regulation by axin1 and axin2 leads to inhibit the Wnt signaling pathway, while in prospective dorsal blastomeres, degradation of axin results in stabilization and nuclear translocation of ctnnb1. The sequence is that of Catenin beta-1 from Xenopus laevis (African clawed frog).